A 341-amino-acid chain; its full sequence is Bis(monoacylglycero)phosphate synthase CLN5 (341 aa).

The Cytoplasmic portion of the chain corresponds to 1–13 (MLRGGPCGAHWRP). A helical; Signal-anchor for type II membrane protein membrane pass occupies residues 14-30 (ALALALLGLATILGASP). Topologically, residues 31–341 (TSGQRWPVPY…PTRHTTFTDL (311 aa)) are lumenal. Cystine bridges form between cysteine 53/cysteine 142 and cysteine 60/cysteine 148. Histidine 100 functions as the Proton acceptor in the catalytic mechanism. N-linked (GlcNAc...) asparagine glycans are attached at residues asparagine 113, asparagine 126, asparagine 161, and asparagine 186. Cysteine 214 functions as the Nucleophile; Acyl-thioester intermediate in the catalytic mechanism. N-linked (GlcNAc...) asparagine glycans are attached at residues asparagine 238, asparagine 254, and asparagine 264. The segment at 287–326 (FLMNFLKIFDTVIIHRQFYLFYNFEYWFLPMKPPFVKITY) is membrane-anchoring.

The protein belongs to the CLN5 family. In terms of assembly, multimer. Interacts with PPT1, TPP1, CLN3, CLN6, CLN8, ATP5F1A and ATP5F1B. Interacts with SORT1, RAB5A and RAB7A. N-glycosylated with both high mannose and complex type sugars. Glycosylation is important for proper folding and trafficking to the lysosomes. In terms of processing, the type II membrane signal anchor is proteolytically cleaved to produce a mature form that is transported to the lysosomes (Bis(monoacylglycero)phosphate synthase CLN5, secreted form). Post-translationally, can undergo proteolytic cleavage at the C-terminus, probably by a cysteine protease and may involve the removal of approximately 10-15 residues from the C-terminal end. Heart, kidney, liver, spleen, muscle and rectum (at protein level).

The protein localises to the lysosome. It is found in the membrane. It catalyses the reaction S-hexadecanoyl-L-cysteinyl-[protein] + H2O = L-cysteinyl-[protein] + hexadecanoate + H(+). It carries out the reaction 2 1-acyl-sn-glycero-3-phospho-(1'-sn-glycerol) = 1-acyl-sn-glycero-3-phospho-(3'-acyl-sn-1'-glycerol) + sn-glycero-3-phospho-(1'-sn-glycerol). The enzyme catalyses 2 1-(9Z-octadecenoyl)-sn-glycero-3-phospho-(1'-sn-glycerol) = 1-(9Z-octadecenoyl)-sn-glycero-3-phospho-(3'-(9Z-octadecenoyl)-1'-sn-glycerol) + sn-glycero-3-phospho-(1'-sn-glycerol). The catalysed reaction is 2 1-octadecanoyl-sn-glycero-3-phospho-(1'-sn-glycerol) = 1-octadecanoyl-sn-glycero-3-phospho-(3'-octadecanoyl-1'-sn-glycerol) + sn-glycero-3-phospho-(1'-sn-glycerol). It catalyses the reaction 2 1-hexadecanoyl-sn-glycero-3-phospho-(1'-sn-glycerol) = 1-hexadecanoyl-sn-glycero-3-phospho-(3'-hexadecanoyl-1'-sn-glycerol) + sn-glycero-3-phospho-(1'-sn-glycerol). It carries out the reaction 2 1-tetradecanoyl-sn-glycero-3-phospho-(1'-sn-glycerol) = 1-tetradecanoyl-sn-glycero-3-phospho-(3'-tetradecanoyl-1'-sn-glycerol) + sn-glycero-3-phospho-(1'-sn-glycerol). Functionally, catalyzes the synthesis of bis(monoacylglycero)phosphate (BMP) via transacylation of 2 molecules of lysophosphatidylglycerol (LPG). BMP also known as lysobisphosphatidic acid plays a key role in the formation of intraluminal vesicles and in maintaining intracellular cholesterol homeostasis. Can use only LPG as the exclusive lysophospholipid acyl donor for base exchange and displays BMP synthase activity towards various LPGs (LPG 14:0, LPG 16:0, LPG 18:0, LPG 18:1) with a higher preference for longer chain lengths. Plays a role in influencing the retrograde trafficking of lysosomal sorting receptors SORT1 and IGF2R from the endosomes to the trans-Golgi network by controlling the recruitment of retromer complex to the endosomal membrane. Regulates the localization and activation of RAB7A which is required to recruit the retromer complex to the endosomal membrane. Exhibits palmitoyl protein thioesterase (S-depalmitoylation) activity in vitro and most likely plays a role in protein S-depalmitoylation. The protein is Bis(monoacylglycero)phosphate synthase CLN5 (Cln5) of Mus musculus (Mouse).